We begin with the raw amino-acid sequence, 482 residues long: Aspartyl/glutamyl-tRNA(Asn/Gln) amidotransferase subunit B (482 aa).

Belongs to the GatB/GatE family. GatB subfamily. Heterotrimer of A, B and C subunits.

It catalyses the reaction L-glutamyl-tRNA(Gln) + L-glutamine + ATP + H2O = L-glutaminyl-tRNA(Gln) + L-glutamate + ADP + phosphate + H(+). The enzyme catalyses L-aspartyl-tRNA(Asn) + L-glutamine + ATP + H2O = L-asparaginyl-tRNA(Asn) + L-glutamate + ADP + phosphate + 2 H(+). Its function is as follows. Allows the formation of correctly charged Asn-tRNA(Asn) or Gln-tRNA(Gln) through the transamidation of misacylated Asp-tRNA(Asn) or Glu-tRNA(Gln) in organisms which lack either or both of asparaginyl-tRNA or glutaminyl-tRNA synthetases. The reaction takes place in the presence of glutamine and ATP through an activated phospho-Asp-tRNA(Asn) or phospho-Glu-tRNA(Gln). The protein is Aspartyl/glutamyl-tRNA(Asn/Gln) amidotransferase subunit B of Thermotoga sp. (strain RQ2).